Consider the following 316-residue polypeptide: Galectin-8 (316 aa).

Galectin domains are found at residues 18-151 and 186-316; these read YVST…IGFR and FEAR…VRSW. The a carbohydrate site is built by Arg-68, Asn-78, and Glu-88. 248–254 contacts a beta-D-galactoside; the sequence is WGEEERN.

Homodimer. Interacts with CALCOCO2/NDP52. Interacts with PDPN; the interaction is glycosylation-dependent; may participate in connection of the lymphatic endothelium to the surrounding extracellular matrix. Expressed in liver, kidney, cardiac muscle, lung, and brain.

It is found in the cytoplasmic vesicle. The protein resides in the cytoplasm. Its subcellular location is the cytosol. In terms of biological role, beta-galactoside-binding lectin that acts as a sensor of membrane damage caused by infection and restricts the proliferation of infecting pathogens by targeting them for autophagy. Detects membrane rupture by binding beta-galactoside ligands located on the lumenal side of the endosome membrane; these ligands becoming exposed to the cytoplasm following rupture. Restricts infection by initiating autophagy via interaction with CALCOCO2/NDP52. Required to restrict infection of bacterial invasion such as S.typhimurium. Also required to restrict infection of Picornaviridae viruses. Has a marked preference for 3'-O-sialylated and 3'-O-sulfated glycans. The sequence is that of Galectin-8 (Lgals8) from Rattus norvegicus (Rat).